The chain runs to 103 residues: Putative membrane protein insertion efficiency factor (103 aa).

The protein belongs to the UPF0161 family.

It localises to the cell inner membrane. Could be involved in insertion of integral membrane proteins into the membrane. The protein is Putative membrane protein insertion efficiency factor of Chlamydia caviae (strain ATCC VR-813 / DSM 19441 / 03DC25 / GPIC) (Chlamydophila caviae).